The chain runs to 886 residues: Chitin synthase 3 (886 aa).

Disordered stretches follow at residues Met1 to Asp70 and Pro86 to Gly138. A compositionally biased stretch (basic and acidic residues) spans Leu7–Gln17. Residues Pro37–Ser56 are compositionally biased toward polar residues. Residue Asn51 is glycosylated (N-linked (GlcNAc...) asparagine). Basic and acidic residues predominate over residues Tyr106 to Ala122. An N-linked (GlcNAc...) asparagine glycan is attached at Asn196. Transmembrane regions (helical) follow at residues Ser428 to Leu448, Arg526 to Phe546, Val556 to Val576, Ile602 to Ser622, Met637 to Val657, Thr683 to Phe703, and Phe712 to Cys732. Residues Asp745 to Ser768 are disordered. 2 helical membrane passes run Val813–Leu833 and Val858–Leu878.

This sequence belongs to the chitin synthase family. Class I subfamily.

The protein localises to the cell membrane. The enzyme catalyses [(1-&gt;4)-N-acetyl-beta-D-glucosaminyl](n) + UDP-N-acetyl-alpha-D-glucosamine = [(1-&gt;4)-N-acetyl-beta-D-glucosaminyl](n+1) + UDP + H(+). Its function is as follows. Polymerizes chitin, a structural polymer of the cell wall and septum, by transferring the sugar moiety of UDP-GlcNAc to the non-reducing end of the growing chitin polymer. Involved in tolerance to hyperosmotic conditions. CHS3 is the only V.dahliae chitin synthase that is not involved in virulence. This Verticillium dahliae (strain VdLs.17 / ATCC MYA-4575 / FGSC 10137) (Verticillium wilt) protein is Chitin synthase 3.